We begin with the raw amino-acid sequence, 276 residues long: Elongation factor Ts, mitochondrial (276 aa).

The protein belongs to the EF-Ts family.

The protein localises to the mitochondrion. Its function is as follows. Associates with the EF-Tu.GDP complex and induces the exchange of GDP to GTP. It remains bound to the aminoacyl-tRNA.EF-Tu.GTP complex up to the GTP hydrolysis stage on the ribosome. This Leishmania infantum protein is Elongation factor Ts, mitochondrial.